Consider the following 440-residue polypeptide: GTPase Obg (440 aa).

The 159-residue stretch at 5-163 (STFVDQTKIE…RTLRLELKVL (159 aa)) folds into the Obg domain. One can recognise an OBG-type G domain in the interval 164–338 (ADVGLVGFPS…LMSRAADLVS (175 aa)). Residues 170 to 177 (GFPSVGKS), 195 to 199 (FTTLK), 217 to 220 (DLPG), 288 to 291 (SQMD), and 319 to 321 (SSV) each bind GTP. Residues Ser177 and Thr197 each coordinate Mg(2+). An OCT domain is found at 362 to 440 (YHRPEKMEFT…IGDFSFEFVQ (79 aa)).

It belongs to the TRAFAC class OBG-HflX-like GTPase superfamily. OBG GTPase family. As to quaternary structure, monomer. Mg(2+) serves as cofactor.

It localises to the cytoplasm. Its function is as follows. An essential GTPase which binds GTP, GDP and possibly (p)ppGpp with moderate affinity, with high nucleotide exchange rates and a fairly low GTP hydrolysis rate. Plays a role in control of the cell cycle, stress response, ribosome biogenesis and in those bacteria that undergo differentiation, in morphogenesis control. This is GTPase Obg from Lactobacillus delbrueckii subsp. bulgaricus (strain ATCC BAA-365 / Lb-18).